The primary structure comprises 38 residues: Non-specific lipid-transfer protein P2 (38 aa).

This sequence belongs to the plant LTP family.

It localises to the secreted. In terms of biological role, plant non-specific lipid-transfer proteins transfer phospholipids as well as galactolipids across membranes. May play a role in wax or cutin deposition in the cell walls of expanding epidermal cells and certain secretory tissues. This chain is Non-specific lipid-transfer protein P2, found in Vitis sp. (Grape).